The following is a 428-amino-acid chain: Enolase (428 aa).

Glutamine 163 contributes to the (2R)-2-phosphoglycerate binding site. Glutamate 205 acts as the Proton donor in catalysis. 3 residues coordinate Mg(2+): aspartate 242, glutamate 285, and aspartate 312. Lysine 337, arginine 366, serine 367, and lysine 388 together coordinate (2R)-2-phosphoglycerate. The Proton acceptor role is filled by lysine 337.

This sequence belongs to the enolase family. Requires Mg(2+) as cofactor.

The protein localises to the cytoplasm. It localises to the secreted. Its subcellular location is the cell surface. The catalysed reaction is (2R)-2-phosphoglycerate = phosphoenolpyruvate + H2O. The protein operates within carbohydrate degradation; glycolysis; pyruvate from D-glyceraldehyde 3-phosphate: step 4/5. Functionally, catalyzes the reversible conversion of 2-phosphoglycerate (2-PG) into phosphoenolpyruvate (PEP). It is essential for the degradation of carbohydrates via glycolysis. In Nitrosomonas europaea (strain ATCC 19718 / CIP 103999 / KCTC 2705 / NBRC 14298), this protein is Enolase.